Consider the following 270-residue polypeptide: UPF0354 protein BA_4944/GBAA_4944/BAS4588 (270 aa).

It belongs to the UPF0354 family.

The sequence is that of UPF0354 protein BA_4944/GBAA_4944/BAS4588 from Bacillus anthracis.